A 484-amino-acid chain; its full sequence is Major extracellular endoglucanase (484 aa).

A signal peptide spans 1 to 25 (MSIFRTASTLALATALALAAGPAFS). The Proton donor role is filled by E182. E303 (nucleophile) is an active-site residue. The segment at 370-402 (GTAGNTTPTPTPTPTPTPTPTPTPTPTPTPGTS) is disordered. Residues 375–399 (TTPTPTPTPTPTPTPTPTPTPTPTP) form a thr-Pro repeats ('hinge') (Pro-Thr box) region. Pro residues predominate over residues 378 to 398 (TPTPTPTPTPTPTPTPTPTPT). One can recognise a CBM2 domain in the interval 395-484 (PTPTPGTSTF…TAEFGFCAAS (90 aa)).

The protein belongs to the glycosyl hydrolase 5 (cellulase A) family.

The catalysed reaction is Endohydrolysis of (1-&gt;4)-beta-D-glucosidic linkages in cellulose, lichenin and cereal beta-D-glucans.. The protein is Major extracellular endoglucanase (engXCA) of Xanthomonas campestris pv. campestris (strain ATCC 33913 / DSM 3586 / NCPPB 528 / LMG 568 / P 25).